Reading from the N-terminus, the 236-residue chain is Apoptosis regulator Bcl-2 (236 aa).

The BH4 signature appears at 10–30 (DNREIVMKYIHYKLSQRGYEW). T69 is subject to Phosphothreonine; by MAPK8. S70 is subject to Phosphoserine; by MAPK8 and PKC. S84 carries the phosphoserine; by MAPK8 modification. Residues 90–104 (VHLTLRRAGDDFSRR) carry the BH3 motif. The BH1 signature appears at 133-152 (ELFRDGVNWGRIVAFFEFGG). The short motif at 184-199 (TWIQDNGGWDAFVELY) is the BH2 element. A helical transmembrane segment spans residues 209-230 (FSWLSLKTLLSLALVGACITLG).

This sequence belongs to the Bcl-2 family. As to quaternary structure, forms homodimers, and heterodimers with BAX, BAD, BAK and Bcl-X(L). Heterodimerization with BAX requires intact BH1 and BH2 motifs, and is necessary for anti-apoptotic activity. Component of the complex, at least composed of LRPPRC, BECN1 and BCL2; the interactions prevent BECN1 from forming an autophagy-inducing complex with PIK3C3. Interacts with EI24. Also interacts with APAF1, BBC3, BCL2L1, BNIPL, MRPL41 and TP53BP2. Binding to FKBP8 seems to target BCL2 to the mitochondria and probably interferes with the binding of BCL2 to its targets. Interacts with BAG1 in an ATP-dependent manner. Interacts with RAF1 (the 'Ser-338' and 'Ser-339' phosphorylated form). Interacts (via the BH4 domain) with EGLN3; the interaction prevents the formation of the BAX-BCL2 complex and inhibits the anti-apoptotic activity of BCL2. Interacts with G0S2; this interaction also prevents the formation of the anti-apoptotic BAX-BCL2 complex. Interacts with RTL10/BOP. Interacts with the SCF(FBXO10) complex. Interacts (via the loop between motifs BH4 and BH3) with NLRP1 (via LRR repeats), but not with NLRP2, NLRP3, NLRP4, PYCARD, nor MEFV. Interacts with GIMAP3/IAN4, GIMAP4/IAN1 and GIMAP5/IAN5. Interacts with BCAP31. Interacts with IRF3; the interaction is inhibited by Sendai virus infection. Interacts with BECN1; thereby inhibiting autophagy in non-starvation conditions. Interacts with AMBRA1; thereby inhibiting autophagy. Post-translationally, phosphorylation/dephosphorylation on Ser-70 regulates anti-apoptotic activity. Growth factor-stimulated phosphorylation on Ser-70 by PKC is required for the anti-apoptosis activity and occurs during the G2/M phase of the cell cycle. In the absence of growth factors, BCL2 appears to be phosphorylated by other protein kinases such as ERKs and stress-activated kinases. Phosphorylated by MAPK8/JNK1 at Thr-69, Ser-70 and Ser-84, which stimulates starvation-induced autophagy. Dephosphorylated by protein phosphatase 2A (PP2A). Proteolytically cleaved by caspases during apoptosis. The cleaved protein, lacking the BH4 motif, has pro-apoptotic activity, causes the release of cytochrome c into the cytosol promoting further caspase activity. In terms of processing, monoubiquitinated by PRKN, leading to an increase in its stability. Ubiquitinated by SCF(FBXO10), leading to its degradation by the proteasome.

The protein localises to the mitochondrion outer membrane. It is found in the nucleus membrane. The protein resides in the endoplasmic reticulum membrane. Its subcellular location is the cytoplasm. Its function is as follows. Suppresses apoptosis in a variety of cell systems including factor-dependent lymphohematopoietic and neural cells. Regulates cell death by controlling the mitochondrial membrane permeability. Appears to function in a feedback loop system with caspases. Inhibits caspase activity either by preventing the release of cytochrome c from the mitochondria and/or by binding to the apoptosis-activating factor (APAF-1). Also acts as an inhibitor of autophagy: interacts with BECN1 and AMBRA1 during non-starvation conditions and inhibits their autophagy function. May attenuate inflammation by impairing NLRP1-inflammasome activation, hence CASP1 activation and IL1B release. This chain is Apoptosis regulator Bcl-2 (BCL2), found in Cricetulus griseus (Chinese hamster).